Reading from the N-terminus, the 274-residue chain is Undecaprenyl-diphosphatase 1 (274 aa).

8 helical membrane passes run 4–24 (LLLL…FLPI), 45–65 (SAVF…YEYW), 84–104 (HLAI…LSFG), 111–131 (LFND…IMWI), 146–166 (IGLK…IPGT), 186–206 (ATEF…LLDL), 217–237 (FDWS…LLLI), and 249–269 (FMVF…FAYT).

This sequence belongs to the UppP family.

It is found in the cell inner membrane. The catalysed reaction is di-trans,octa-cis-undecaprenyl diphosphate + H2O = di-trans,octa-cis-undecaprenyl phosphate + phosphate + H(+). Its function is as follows. Catalyzes the dephosphorylation of undecaprenyl diphosphate (UPP). Confers resistance to bacitracin. In Acinetobacter baylyi (strain ATCC 33305 / BD413 / ADP1), this protein is Undecaprenyl-diphosphatase 1.